Consider the following 383-residue polypeptide: Cytochrome b (383 aa).

The next 4 membrane-spanning stretches (helical) occupy residues 35–55 (FGSI…ILSM), 79–100 (WLFR…YIHI), 115–135 (WGIG…GYVL), and 180–200 (FFSL…LHLF). Heme b contacts are provided by His85 and His99. Positions 184 and 198 each coordinate heme b. His203 lines the a ubiquinone pocket. 4 helical membrane-spanning segments follow: residues 228–248 (IKDL…NFQF), 290–310 (LGGV…IFYN), 321–341 (LNKI…WLGK), and 348–368 (FTNI…LNFY).

It belongs to the cytochrome b family. As to quaternary structure, the main subunits of complex b-c1 are: cytochrome b, cytochrome c1 and the Rieske protein. The cofactor is heme b.

It is found in the mitochondrion inner membrane. Its function is as follows. Component of the ubiquinol-cytochrome c reductase complex (complex III or cytochrome b-c1 complex) that is part of the mitochondrial respiratory chain. The b-c1 complex mediates electron transfer from ubiquinol to cytochrome c. Contributes to the generation of a proton gradient across the mitochondrial membrane that is then used for ATP synthesis. In Apis mellifera ligustica (Common honeybee), this protein is Cytochrome b (MT-CYB).